Consider the following 397-residue polypeptide: 1-carboxy-3-chloro-3,4-dihydroxycyclo hexa-1,5-diene dehydrogenase (397 aa).

It to P.putida PHT4.

The protein is 1-carboxy-3-chloro-3,4-dihydroxycyclo hexa-1,5-diene dehydrogenase (cbaC) of Comamonas testosteroni (Pseudomonas testosteroni).